The following is a 235-amino-acid chain: Peptidase E (235 aa).

Residues Ser122, Asp137, and His159 each act as charge relay system in the active site.

It belongs to the peptidase S51 family.

It is found in the cytoplasm. It catalyses the reaction Dipeptidase E catalyzes the hydrolysis of dipeptides Asp-|-Xaa. It does not act on peptides with N-terminal Glu, Asn or Gln, nor does it cleave isoaspartyl peptides.. In terms of biological role, hydrolyzes dipeptides containing N-terminal aspartate residues. May play a role in allowing the cell to use peptide aspartate to spare carbon otherwise required for the synthesis of the aspartate family of amino acids. This is Peptidase E from Shewanella denitrificans (strain OS217 / ATCC BAA-1090 / DSM 15013).